The following is a 216-amino-acid chain: Urease accessory protein UreG (216 aa).

25-32 (GPVGSGKT) lines the GTP pocket.

The protein belongs to the SIMIBI class G3E GTPase family. UreG subfamily. In terms of assembly, homodimer. UreD, UreF and UreG form a complex that acts as a GTP-hydrolysis-dependent molecular chaperone, activating the urease apoprotein by helping to assemble the nickel containing metallocenter of UreC. The UreE protein probably delivers the nickel.

The protein resides in the cytoplasm. Facilitates the functional incorporation of the urease nickel metallocenter. This process requires GTP hydrolysis, probably effectuated by UreG. The sequence is that of Urease accessory protein UreG from Burkholderia mallei (strain NCTC 10247).